Consider the following 329-residue polypeptide: MQFIDEAKIFIKGGNGGDGCVSFRREKFVPNGGPDGGNGGCGGDIIFIGDRHLNTLINFKFKQHFLAQNGRAGAGNNRTGKSGQNLVLKVPVGTQILSNNKEHVIFDLTKDGQEFIIIRGGKGGLGNTYFKSSINQKPRKNTVGEIGDSMWVWLHLKLLSDVGLVGLPNAGKSTFLSAITSAKPKIADYPFTTLTPNLGVVYINNNSFVVADIPGLIAGAHLGQGLGDKFLKHIERCRIIVHLLDITAENLLQNYYTIRDELSSYSLSLKDKTEILCFTKTDTQSNEVIMSKLLELQPVINRVIYPISSYTKYGIKKLLANILSELQKS.

Residues 1 to 159 (MQFIDEAKIF…MWVWLHLKLL (159 aa)) enclose the Obg domain. Residues 160-327 (SDVGLVGLPN…LLANILSELQ (168 aa)) form the OBG-type G domain. GTP-binding positions include 166-173 (GLPNAGKS), 191-195 (FTTLT), 212-215 (DIPG), 279-282 (TKTD), and 308-310 (SSY). Positions 173 and 193 each coordinate Mg(2+).

The protein belongs to the TRAFAC class OBG-HflX-like GTPase superfamily. OBG GTPase family. As to quaternary structure, monomer. Requires Mg(2+) as cofactor.

It localises to the cytoplasm. An essential GTPase which binds GTP, GDP and possibly (p)ppGpp with moderate affinity, with high nucleotide exchange rates and a fairly low GTP hydrolysis rate. Plays a role in control of the cell cycle, stress response, ribosome biogenesis and in those bacteria that undergo differentiation, in morphogenesis control. The protein is GTPase Obg of Orientia tsutsugamushi (strain Boryong) (Rickettsia tsutsugamushi).